We begin with the raw amino-acid sequence, 341 residues long: Phosphoribosylformylglycinamidine cyclo-ligase (341 aa).

Belongs to the AIR synthase family.

The protein resides in the cytoplasm. The enzyme catalyses 2-formamido-N(1)-(5-O-phospho-beta-D-ribosyl)acetamidine + ATP = 5-amino-1-(5-phospho-beta-D-ribosyl)imidazole + ADP + phosphate + H(+). It functions in the pathway purine metabolism; IMP biosynthesis via de novo pathway; 5-amino-1-(5-phospho-D-ribosyl)imidazole from N(2)-formyl-N(1)-(5-phospho-D-ribosyl)glycinamide: step 2/2. This chain is Phosphoribosylformylglycinamidine cyclo-ligase, found in Xanthomonas axonopodis pv. citri (strain 306).